The chain runs to 189 residues: Nucleolar protein 16 (189 aa).

Basic residues predominate over residues 1–33; sequence MARDVKKRGKPAYTNRRNRQKYLKKKDNKKKLS. Positions 1–34 are disordered; that stretch reads MARDVKKRGKPAYTNRRNRQKYLKKKDNKKKLSK.

The protein belongs to the NOP16 family.

It localises to the nucleus. The protein resides in the nucleolus. The chain is Nucleolar protein 16 from Caenorhabditis elegans.